The primary structure comprises 167 residues: MADYYNVGKVTSAHGIKGEVKVYPLTNVPERFYDLEYVWIFDDQQRPHKYDIEYVKIISKGVCVKLKGIDTRGDAEKLKGAFLKVDSQNALELEENEYFIKDLVGMKVYTEEGSFLGTLVEVLKTGANDVYVIKTEEREILIPAIKEVVKKVDVDNKVMVVHLLEGL.

Residues 94–167 (EENEYFIKDL…VMVVHLLEGL (74 aa)) enclose the PRC barrel domain.

This sequence belongs to the RimM family. As to quaternary structure, binds ribosomal protein uS19.

The protein localises to the cytoplasm. An accessory protein needed during the final step in the assembly of 30S ribosomal subunit, possibly for assembly of the head region. Essential for efficient processing of 16S rRNA. May be needed both before and after RbfA during the maturation of 16S rRNA. It has affinity for free ribosomal 30S subunits but not for 70S ribosomes. This is Ribosome maturation factor RimM from Thermoanaerobacter pseudethanolicus (strain ATCC 33223 / 39E) (Clostridium thermohydrosulfuricum).